The chain runs to 259 residues: Imidazole glycerol phosphate synthase subunit HisF (259 aa).

Catalysis depends on residues aspartate 11 and aspartate 130.

The protein belongs to the HisA/HisF family. As to quaternary structure, heterodimer of HisH and HisF.

Its subcellular location is the cytoplasm. The catalysed reaction is 5-[(5-phospho-1-deoxy-D-ribulos-1-ylimino)methylamino]-1-(5-phospho-beta-D-ribosyl)imidazole-4-carboxamide + L-glutamine = D-erythro-1-(imidazol-4-yl)glycerol 3-phosphate + 5-amino-1-(5-phospho-beta-D-ribosyl)imidazole-4-carboxamide + L-glutamate + H(+). It participates in amino-acid biosynthesis; L-histidine biosynthesis; L-histidine from 5-phospho-alpha-D-ribose 1-diphosphate: step 5/9. Its function is as follows. IGPS catalyzes the conversion of PRFAR and glutamine to IGP, AICAR and glutamate. The HisF subunit catalyzes the cyclization activity that produces IGP and AICAR from PRFAR using the ammonia provided by the HisH subunit. This Acidovorax ebreus (strain TPSY) (Diaphorobacter sp. (strain TPSY)) protein is Imidazole glycerol phosphate synthase subunit HisF.